The chain runs to 368 residues: Agmatine deiminase (368 aa).

Cys357 acts as the Amidino-cysteine intermediate in catalysis.

The protein belongs to the agmatine deiminase family. In terms of assembly, homodimer.

It carries out the reaction agmatine + H2O = N-carbamoylputrescine + NH4(+). It functions in the pathway amine and polyamine biosynthesis; putrescine biosynthesis via agmatine pathway; N-carbamoylputrescine from agmatine: step 1/1. Mediates the hydrolysis of agmatine into N-carbamoylputrescine in the arginine decarboxylase (ADC) pathway of putrescine biosynthesis, a basic polyamine. The polypeptide is Agmatine deiminase (Pseudomonas syringae pv. tomato (strain ATCC BAA-871 / DC3000)).